A 711-amino-acid chain; its full sequence is T-box transcription factor TBX2 (711 aa).

A DNA-binding region (T-box) is located at residues 109-287 (LEAKELWDQF…NNPFAKGFRD (179 aa)). The interval 313–449 (PERDGAESDA…GEGKEPSLAP (137 aa)) is disordered. Residues 326–340 (DPPPAREPPPSPSAA) are compositionally biased toward pro residues. Ser336, Ser342, and Ser360 each carry phosphoserine. Composition is skewed to basic and acidic residues over residues 363–372 (EPERTGEERS), 390–409 (TEPE…KEPT), and 421–444 (SLEK…EGKE). The repression domain 1 (RD1) stretch occupies residues 518–602 (GSGSSGGAGP…ATSAAAAAAA (85 aa)). Ser623, Ser652, Ser656, and Ser675 each carry phosphoserine. Positions 640–687 (TGLAAEGSKGGNSREPSPLPELALRKVGGPSRGALSPSGSAKEAASEL) are disordered.

Binds DNA as a monomer. Interacts with CHD4, HDAC1 and HDAC2, perhaps as components of a NuRD-like complex. Interacts with CBX3, HMGB2 and PBX1. Interacts with PML. In terms of processing, phosphorylated. May be phosphorylated by p38 MAPK in response to UV irradiation stress. As to expression, in adults, highest levels in lung. Also found in heart, kidney, and ovary.

Its subcellular location is the nucleus. In terms of biological role, transcription factor which acts as a transcriptional repressor. May also function as a transcriptional activator. Binds to the palindromic T site 5'-TTCACACCTAGGTGTGAA-3' DNA sequence, or a half-site, which are present in the regulatory region of several genes. Required for cardiac atrioventricular canal formation. May cooperate with NKX2.5 to negatively modulate expression of NPPA/ANF in the atrioventricular canal. May play a role as a positive regulator of TGFB2 expression, perhaps acting in concert with GATA4 in the developing outflow tract myocardium. Plays a role in limb pattern formation. Acts as a transcriptional repressor of ADAM10 gene expression, perhaps in concert with histone deacetylase HDAC1 as cofactor. Involved in branching morphogenesis in both developing lungs and adult mammary glands, via negative modulation of target genes; acting redundantly with TBX3. Required, together with TBX3, to maintain cell proliferation in the embryonic lung mesenchyme; perhaps acting downstream of SHH, BMP and TGFbeta signaling. Involved in modulating early inner ear development, acting independently of, and also redundantly with TBX3, in different subregions of the developing ear. Acts as a negative regulator of PML function in cellular senescence. Acts as a negative regulator of expression of CDKN1A/p21, IL33 and CCN4; repression of CDKN1A is enhanced in response to UV-induced stress, perhaps as a result of phosphorylation by p38 MAPK. Negatively modulates expression of CDKN2A/p19ARF and CDH1/E-cadherin. Plays a role in induction of the epithelial-mesenchymal transition (EMT). Plays a role in melanocyte proliferation, perhaps via regulation of cyclin CCND1. Involved in melanogenesis, acting via negative modulation of expression of DHICA oxidase/TYRP1 and P protein/OCA2. Involved in regulating retinal pigment epithelium (RPE) cell proliferation, perhaps via negatively modulating transcription of the transcription factor CEBPD. The sequence is that of T-box transcription factor TBX2 (Tbx2) from Mus musculus (Mouse).